Here is a 184-residue protein sequence, read N- to C-terminus: Oligoribonuclease (184 aa).

An Exonuclease domain is found at leucine 8 to leucine 171. Tyrosine 129 is an active-site residue.

Belongs to the oligoribonuclease family.

The protein localises to the cytoplasm. In terms of biological role, 3'-to-5' exoribonuclease specific for small oligoribonucleotides. This is Oligoribonuclease from Pasteurella multocida (strain Pm70).